The sequence spans 801 residues: Growth-differentiation transition protein 7 (801 aa).

An N-terminal signal peptide occupies residues 1–22 (MIKTILIKLILLVIFCYHFLFA).

Belongs to the GDT family.

The protein resides in the secreted. The protein is Growth-differentiation transition protein 7 (gdt7) of Dictyostelium discoideum (Social amoeba).